The primary structure comprises 277 residues: 4-hydroxybenzoate octaprenyltransferase (277 aa).

8 helical membrane passes run Phe24 to Ile44, Val81 to Leu101, Asn102 to Met122, Pro129 to Ile149, Leu152 to Thr172, Ile201 to Glu221, Ile224 to Thr244, and Ala255 to Tyr275.

This sequence belongs to the UbiA prenyltransferase family. Mg(2+) serves as cofactor.

The protein localises to the cell inner membrane. The catalysed reaction is all-trans-octaprenyl diphosphate + 4-hydroxybenzoate = 4-hydroxy-3-(all-trans-octaprenyl)benzoate + diphosphate. The protein operates within cofactor biosynthesis; ubiquinone biosynthesis. Its function is as follows. Catalyzes the prenylation of para-hydroxybenzoate (PHB) with an all-trans polyprenyl group. Mediates the second step in the final reaction sequence of ubiquinone-8 (UQ-8) biosynthesis, which is the condensation of the polyisoprenoid side chain with PHB, generating the first membrane-bound Q intermediate 3-octaprenyl-4-hydroxybenzoate. In Haemophilus ducreyi (strain 35000HP / ATCC 700724), this protein is 4-hydroxybenzoate octaprenyltransferase.